A 688-amino-acid polypeptide reads, in one-letter code: Glycine--tRNA ligase beta subunit (688 aa).

This sequence belongs to the class-II aminoacyl-tRNA synthetase family. As to quaternary structure, tetramer of two alpha and two beta subunits.

It localises to the cytoplasm. The catalysed reaction is tRNA(Gly) + glycine + ATP = glycyl-tRNA(Gly) + AMP + diphosphate. In Histophilus somni (strain 129Pt) (Haemophilus somnus), this protein is Glycine--tRNA ligase beta subunit.